Consider the following 92-residue polypeptide: MTRSAKKGPFCDASLVKKVEVAQANKDKKPIKTWSRRSTILPDFIGLTIAVHNGRQHVPVYVSENMVGHKLGEFALTRTFKGHAADKKVTKK.

It belongs to the universal ribosomal protein uS19 family.

Its function is as follows. Protein S19 forms a complex with S13 that binds strongly to the 16S ribosomal RNA. The sequence is that of Small ribosomal subunit protein uS19 from Polynucleobacter asymbioticus (strain DSM 18221 / CIP 109841 / QLW-P1DMWA-1) (Polynucleobacter necessarius subsp. asymbioticus).